A 112-amino-acid chain; its full sequence is Large ribosomal subunit protein uL22 (112 aa).

Belongs to the universal ribosomal protein uL22 family. As to quaternary structure, part of the 50S ribosomal subunit.

Its function is as follows. This protein binds specifically to 23S rRNA; its binding is stimulated by other ribosomal proteins, e.g. L4, L17, and L20. It is important during the early stages of 50S assembly. It makes multiple contacts with different domains of the 23S rRNA in the assembled 50S subunit and ribosome. Functionally, the globular domain of the protein is located near the polypeptide exit tunnel on the outside of the subunit, while an extended beta-hairpin is found that lines the wall of the exit tunnel in the center of the 70S ribosome. In Nitratidesulfovibrio vulgaris (strain DSM 19637 / Miyazaki F) (Desulfovibrio vulgaris), this protein is Large ribosomal subunit protein uL22.